A 430-amino-acid chain; its full sequence is DD-carboxypeptidase/endopeptidase Mpg (430 aa).

3 residues coordinate Zn(2+): His-295, Asp-299, and His-375.

This sequence belongs to the peptidase M23B family. As to quaternary structure, monomer. Requires Zn(2+) as cofactor. Post-translationally, likely to be synthesized as a proenzyme. The cleavage of the N-terminal domain is probably required for the activation of the enzyme.

The protein resides in the cell outer membrane. Its function is as follows. Has both endopeptidase and DD-carboxypeptidase activities. Degrades cell wall peptidoglycan (PG) to allow consummate expression of pili. The chain is DD-carboxypeptidase/endopeptidase Mpg from Neisseria meningitidis serogroup B (strain ATCC 13091 / M2091).